A 128-amino-acid chain; its full sequence is Large ribosomal subunit protein uL22 (128 aa).

The disordered stretch occupies residues 1–22; sequence MARGHRSQIKRERNANKDTRPS. Positions 9–21 are enriched in basic and acidic residues; it reads IKRERNANKDTRP.

The protein belongs to the universal ribosomal protein uL22 family. In terms of assembly, part of the 50S ribosomal subunit.

In terms of biological role, this protein binds specifically to 23S rRNA; its binding is stimulated by other ribosomal proteins, e.g. L4, L17, and L20. It is important during the early stages of 50S assembly. It makes multiple contacts with different domains of the 23S rRNA in the assembled 50S subunit and ribosome. Its function is as follows. The globular domain of the protein is located near the polypeptide exit tunnel on the outside of the subunit, while an extended beta-hairpin is found that lines the wall of the exit tunnel in the center of the 70S ribosome. This is Large ribosomal subunit protein uL22 from Lachnoclostridium phytofermentans (strain ATCC 700394 / DSM 18823 / ISDg) (Clostridium phytofermentans).